We begin with the raw amino-acid sequence, 73 residues long: MGLSWQQLLILLLVVVVIFGTKKLRNIGSDLGGAVKDFKKAMNDDQPKDAEFKKISEEVEQTSVENSKQKEQA.

Residues 1–21 (MGLSWQQLLILLLVVVVIFGT) form a helical membrane-spanning segment.

It belongs to the TatA/E family. In terms of assembly, the Tat system comprises two distinct complexes: a TatABC complex, containing multiple copies of TatA, TatB and TatC subunits, and a separate TatA complex, containing only TatA subunits. Substrates initially bind to the TatABC complex, which probably triggers association of the separate TatA complex to form the active translocon.

It is found in the cell inner membrane. In terms of biological role, part of the twin-arginine translocation (Tat) system that transports large folded proteins containing a characteristic twin-arginine motif in their signal peptide across membranes. TatA could form the protein-conducting channel of the Tat system. This Histophilus somni (strain 129Pt) (Haemophilus somnus) protein is Sec-independent protein translocase protein TatA.